Reading from the N-terminus, the 658-residue chain is Alkyldihydroxyacetonephosphate synthase, peroxisomal (658 aa).

2 disordered regions span residues 1 to 41 and 63 to 86; these read MAEA…LRVL and AASA…IPKK. The N-terminal 58 residues, 1–58, are a transit peptide targeting the peroxisome; that stretch reads MAEAAAAAGGTGLGAGASYGSAADRDRDPDPDRAGRRLRVLSGHLLGRPREALSTNEC. The segment covering 23-35 has biased composition (basic and acidic residues); it reads ADRDRDPDPDRAG. Positions 63–77 are enriched in low complexity; sequence AASAATAAPTATPAA. A Phosphoserine modification is found at S65. Position 74 is a phosphothreonine (T74). K102 bears the N6-acetyllysine mark. An FAD-binding PCMH-type domain is found at 202-384; the sequence is FERIPDIVLW…TEATIKIRPV (183 aa). Residues 234 to 240, 303 to 309, and 316 to 319 contribute to the FAD site; these read PIGGGTS, DSLEFST, and TRAS. The residue at position 347 (K347) is an N6-acetyllysine. An FAD-binding site is contributed by 368–374; it reads EGTLGVI. Residue R515 participates in substrate binding. Residue Y578 is the Proton donor/acceptor of the active site. Important for enzyme activity regions lie at residues 615–617 and 654–658; these read HHH and NRNLL.

Belongs to the FAD-binding oxidoreductase/transferase type 4 family. As to quaternary structure, homodimer. The cofactor is FAD.

The protein localises to the peroxisome membrane. The protein resides in the peroxisome. It carries out the reaction a long chain fatty alcohol + a 1-acylglycerone 3-phosphate = a 1-O-alkylglycerone 3-phosphate + a long-chain fatty acid + H(+). The enzyme catalyses hexadecan-1-ol + 1-hexadecanoylglycerone 3-phosphate = 1-O-hexadecylglycerone 3-phosphate + hexadecanoate + H(+). It catalyses the reaction 1-hexadecanoylglycerone 3-phosphate + a long-chain fatty acid = a 1-acylglycerone 3-phosphate + hexadecanoate. The protein operates within glycerolipid metabolism; ether lipid biosynthesis. Catalyzes the exchange of the acyl chain in acyl-dihydroxyacetonephosphate (acyl-DHAP) for a long chain fatty alcohol, yielding the first ether linked intermediate, i.e. alkyl-dihydroxyacetonephosphate (alkyl-DHAP), in the pathway of ether lipid biosynthesis. The sequence is that of Alkyldihydroxyacetonephosphate synthase, peroxisomal (AGPS) from Homo sapiens (Human).